A 214-amino-acid polypeptide reads, in one-letter code: Phosphatidylserine decarboxylase proenzyme (214 aa).

Ser-183 serves as the catalytic Schiff-base intermediate with substrate; via pyruvic acid. Ser-183 bears the Pyruvic acid (Ser); by autocatalysis mark.

Belongs to the phosphatidylserine decarboxylase family. PSD-A subfamily. As to quaternary structure, heterodimer of a large membrane-associated beta subunit and a small pyruvoyl-containing alpha subunit. Pyruvate is required as a cofactor. Post-translationally, is synthesized initially as an inactive proenzyme. Formation of the active enzyme involves a self-maturation process in which the active site pyruvoyl group is generated from an internal serine residue via an autocatalytic post-translational modification. Two non-identical subunits are generated from the proenzyme in this reaction, and the pyruvate is formed at the N-terminus of the alpha chain, which is derived from the carboxyl end of the proenzyme. The post-translation cleavage follows an unusual pathway, termed non-hydrolytic serinolysis, in which the side chain hydroxyl group of the serine supplies its oxygen atom to form the C-terminus of the beta chain, while the remainder of the serine residue undergoes an oxidative deamination to produce ammonia and the pyruvoyl prosthetic group on the alpha chain.

The protein resides in the cell membrane. The catalysed reaction is a 1,2-diacyl-sn-glycero-3-phospho-L-serine + H(+) = a 1,2-diacyl-sn-glycero-3-phosphoethanolamine + CO2. It participates in phospholipid metabolism; phosphatidylethanolamine biosynthesis; phosphatidylethanolamine from CDP-diacylglycerol: step 2/2. Its function is as follows. Catalyzes the formation of phosphatidylethanolamine (PtdEtn) from phosphatidylserine (PtdSer). The chain is Phosphatidylserine decarboxylase proenzyme from Chlorobaculum parvum (strain DSM 263 / NCIMB 8327) (Chlorobium vibrioforme subsp. thiosulfatophilum).